The chain runs to 511 residues: Trafficking protein particle complex subunit 13 homolog (511 aa).

It belongs to the TRAPPC13 family.

The sequence is that of Trafficking protein particle complex subunit 13 homolog from Dictyostelium discoideum (Social amoeba).